We begin with the raw amino-acid sequence, 224 residues long: UPF0758 protein IL0240 (224 aa).

An MPN domain is found at 102 to 224 (GFTEPTMVKD…PISFAERGLL (123 aa)). 3 residues coordinate Zn(2+): His-173, His-175, and Asp-186. The short motif at 173–186 (HNHPSGVAEPSQAD) is the JAMM motif element.

This sequence belongs to the UPF0758 family.

This is UPF0758 protein IL0240 from Idiomarina loihiensis (strain ATCC BAA-735 / DSM 15497 / L2-TR).